The primary structure comprises 79 residues: Conotoxin Tr6.2 (79 aa).

An N-terminal signal peptide occupies residues Met-1 to Ala-22. Residues Val-23–Arg-47 constitute a propeptide that is removed on maturation. 3 disulfide bridges follow: Cys-49–Cys-62, Cys-56–Cys-67, and Cys-61–Cys-77. Residues Pro-60 and Pro-63 each carry the 4-hydroxyproline modification.

The protein belongs to the conotoxin O1 superfamily. In terms of tissue distribution, expressed by the venom duct.

The protein localises to the secreted. Its function is as follows. Ion channel inhibitor that inhibits the increase in intracellular calcium upon depolarization in DRG neurons. In vivo, both intraperitoneal and intracranial injections into mice induce hyperactivity. This is Conotoxin Tr6.2 from Conus terebra (Sea snail).